A 411-amino-acid chain; its full sequence is Citrate synthase (411 aa).

Catalysis depends on residues H304 and D363.

Belongs to the citrate synthase family.

It catalyses the reaction oxaloacetate + acetyl-CoA + H2O = citrate + CoA + H(+). Its pathway is carbohydrate metabolism; tricarboxylic acid cycle; isocitrate from oxaloacetate: step 1/2. The chain is Citrate synthase (gltA) from Rickettsia parkeri.